The chain runs to 365 residues: MKKTSLSSWHEKAGAKIIDFGGWLMPVQYSGIMAEHKAVRSAAGLFDVSHMGNFYVKGRRALEFLQSVTTNDLSRTVDGQAQYTIMLYENGGIVDDLIIYRIDSVTFFLIVNAGNCDKDFAWLEEHAGAFEGVQLSNHSDQLSLIALQGPKAFSILSRVIPEIDADRLPSFHFRQLPFMGAELMVARTGYTGEAGVEICLPNALAQPLWEALLDAGREDGLVPVGLGARDTLRLEMGYSLYGHEIDQDTNPLEARLKWVVSMEKGPFIGREACRQVELDPRFGVAGFSLEGRALARQGCRVFNADRQEIGKVCSGTISPTLQEPIGTASLVREYLKPGTPVFVEIRGSLQPGQIRRLPFVKPALL.

It belongs to the GcvT family. In terms of assembly, the glycine cleavage system is composed of four proteins: P, T, L and H.

It carries out the reaction N(6)-[(R)-S(8)-aminomethyldihydrolipoyl]-L-lysyl-[protein] + (6S)-5,6,7,8-tetrahydrofolate = N(6)-[(R)-dihydrolipoyl]-L-lysyl-[protein] + (6R)-5,10-methylene-5,6,7,8-tetrahydrofolate + NH4(+). Its function is as follows. The glycine cleavage system catalyzes the degradation of glycine. The polypeptide is Aminomethyltransferase (Chlorobium phaeovibrioides (strain DSM 265 / 1930) (Prosthecochloris vibrioformis (strain DSM 265))).